The primary structure comprises 512 residues: Maturase K (512 aa).

It belongs to the intron maturase 2 family. MatK subfamily.

The protein resides in the plastid. It localises to the chloroplast. Its function is as follows. Usually encoded in the trnK tRNA gene intron. Probably assists in splicing its own and other chloroplast group II introns. The protein is Maturase K of Erythranthe guttata (Yellow monkey flower).